Consider the following 334-residue polypeptide: MDDRMIDGELQDQDVEIELSLRPSTLSQYIGQDKVKENLTIFIQAAKMREEPLDHVLLYGPPGLGKTTLASIISYEMGVQFRSTSGPAIERAGDLAAILSSLEPGDVLFIDEVHRLPRSVEEVLYAAMEDFFIDIVIGTGPSARSVRIDLPPFTLVGATTRAGLLSAPLRDRFGVLSRLEYYEIKDLCNIVERTADIFNMPISSEAAIEVARRSRGTPRIANRLLKRVRDISQVKGEEEISLESTKQALEMLQVDDAGLDHVDHKLLTGIIEGFSGGPVGLDTIAATIGEESQTIEEVYEPFLLQLGFIQRTPRGRVITSKAYDHLGIKRTGED.

Residues 1 to 182 (MDDRMIDGEL…FGVLSRLEYY (182 aa)) form a large ATPase domain (RuvB-L) region. Residues leucine 21, arginine 22, glycine 63, lysine 66, threonine 67, threonine 68, 129–131 (EDF), arginine 172, tyrosine 182, and arginine 219 contribute to the ATP site. Threonine 67 is a binding site for Mg(2+). The small ATPAse domain (RuvB-S) stretch occupies residues 183–253 (EIKDLCNIVE…STKQALEMLQ (71 aa)). The segment at 256–334 (DAGLDHVDHK…HLGIKRTGED (79 aa)) is head domain (RuvB-H). Residues arginine 311 and arginine 316 each contribute to the DNA site.

This sequence belongs to the RuvB family. In terms of assembly, homohexamer. Forms an RuvA(8)-RuvB(12)-Holliday junction (HJ) complex. HJ DNA is sandwiched between 2 RuvA tetramers; dsDNA enters through RuvA and exits via RuvB. An RuvB hexamer assembles on each DNA strand where it exits the tetramer. Each RuvB hexamer is contacted by two RuvA subunits (via domain III) on 2 adjacent RuvB subunits; this complex drives branch migration. In the full resolvosome a probable DNA-RuvA(4)-RuvB(12)-RuvC(2) complex forms which resolves the HJ.

Its subcellular location is the cytoplasm. The enzyme catalyses ATP + H2O = ADP + phosphate + H(+). The RuvA-RuvB-RuvC complex processes Holliday junction (HJ) DNA during genetic recombination and DNA repair, while the RuvA-RuvB complex plays an important role in the rescue of blocked DNA replication forks via replication fork reversal (RFR). RuvA specifically binds to HJ cruciform DNA, conferring on it an open structure. The RuvB hexamer acts as an ATP-dependent pump, pulling dsDNA into and through the RuvAB complex. RuvB forms 2 homohexamers on either side of HJ DNA bound by 1 or 2 RuvA tetramers; 4 subunits per hexamer contact DNA at a time. Coordinated motions by a converter formed by DNA-disengaged RuvB subunits stimulates ATP hydrolysis and nucleotide exchange. Immobilization of the converter enables RuvB to convert the ATP-contained energy into a lever motion, pulling 2 nucleotides of DNA out of the RuvA tetramer per ATP hydrolyzed, thus driving DNA branch migration. The RuvB motors rotate together with the DNA substrate, which together with the progressing nucleotide cycle form the mechanistic basis for DNA recombination by continuous HJ branch migration. Branch migration allows RuvC to scan DNA until it finds its consensus sequence, where it cleaves and resolves cruciform DNA. The protein is Holliday junction branch migration complex subunit RuvB of Oceanobacillus iheyensis (strain DSM 14371 / CIP 107618 / JCM 11309 / KCTC 3954 / HTE831).